The following is a 456-amino-acid chain: Cysteine--tRNA ligase (456 aa).

Residue Cys30 coordinates Zn(2+). Positions 32–42 match the 'HIGH' region motif; sequence MTVYDFCHIGH. Cys211, His236, and Glu240 together coordinate Zn(2+). Residues 268-272 carry the 'KMSKS' region motif; the sequence is KMSKS. Position 271 (Lys271) interacts with ATP.

The protein belongs to the class-I aminoacyl-tRNA synthetase family. Monomer. The cofactor is Zn(2+).

It localises to the cytoplasm. It catalyses the reaction tRNA(Cys) + L-cysteine + ATP = L-cysteinyl-tRNA(Cys) + AMP + diphosphate. The polypeptide is Cysteine--tRNA ligase (Dichelobacter nodosus (strain VCS1703A)).